Here is a 388-residue protein sequence, read N- to C-terminus: Omega-hydroxy-beta-dihydromenaquinone-9 sulfotransferase Stf3 (388 aa).

Belongs to the Stf3 family.

It carries out the reaction omega-hydroxy-beta-dihydromenaquinone-9 + 3'-phosphoadenylyl sulfate = omega-sulfo-beta-dihydromenaquinone-9 + adenosine 3',5'-bisphosphate + H(+). Its function is as follows. Involved in the biosynthesis of sulfomenaquinone (SMK, initially named S881 on the basis of its mass), which is localized in the outer envelope of M.bovis and negatively regulates its virulence. Catalyzes the transfer of a sulfonate group from 3'-phosphoadenosine-5'-phosphosulfate (PAPS) to omega-hydroxy-beta-dihydromenaquinone-9, generating omega-sulfo-beta-dihydromenaquinone-9 (sulfomenaquinone). In Mycobacterium bovis (strain ATCC BAA-935 / AF2122/97), this protein is Omega-hydroxy-beta-dihydromenaquinone-9 sulfotransferase Stf3.